Reading from the N-terminus, the 158-residue chain is Large ribosomal subunit protein uL30 (158 aa).

It belongs to the universal ribosomal protein uL30 family. Part of the 50S ribosomal subunit.

In Sulfurisphaera tokodaii (strain DSM 16993 / JCM 10545 / NBRC 100140 / 7) (Sulfolobus tokodaii), this protein is Large ribosomal subunit protein uL30.